The sequence spans 230 residues: tRNA (guanine-N(7)-)-methyltransferase (230 aa).

S-adenosyl-L-methionine-binding residues include Glu61, Glu86, Asn113, and Asp136. Asp136 is a catalytic residue. Substrate-binding positions include Lys140, Asp172, and 208-211 (TKYE).

It belongs to the class I-like SAM-binding methyltransferase superfamily. TrmB family.

It catalyses the reaction guanosine(46) in tRNA + S-adenosyl-L-methionine = N(7)-methylguanosine(46) in tRNA + S-adenosyl-L-homocysteine. Its pathway is tRNA modification; N(7)-methylguanine-tRNA biosynthesis. Its function is as follows. Catalyzes the formation of N(7)-methylguanine at position 46 (m7G46) in tRNA. The sequence is that of tRNA (guanine-N(7)-)-methyltransferase from Mycobacterium leprae (strain Br4923).